A 661-amino-acid polypeptide reads, in one-letter code: Potassium voltage-gated channel subfamily KQT member 1 (661 aa).

Disordered stretches follow at residues 1 to 29 (MAAA…ESAG) and 42 to 88 (ESGP…SLDP). The Cytoplasmic segment spans residues 1-119 (MAAASTPPRA…YNFLERPTGW (119 aa)). At S27 the chain carries Phosphoserine; by PKA. The span at 54 to 85 (VSPPSAPEPAPPASPASPAPPAADQGPQPPVS) shows a compositional bias: pro residues. A helical membrane pass occupies residues 120-141 (KCFAYHFTVFLIVLVCLIFSVL). Over 142–152 (STIEQYATLAT) the chain is Extracellular. The chain crosses the membrane as a helical span at residues 153–175 (GTLFWMEIVLVVFFGTEYVVRLW). Over 176–191 (SAGCRSKYVGLWGRLR) the chain is Cytoplasmic. The chain crosses the membrane as a helical span at residues 192–217 (FARKPISIIDLIVVVASMVVLCVGSK). The Extracellular segment spans residues 218–225 (GQVFATSA). The chain crosses the membrane as a helical; Voltage-sensor span at residues 226–241 (IRGIRFLQILRMLHVD). Residues 237–245 (MLHVDRQGG) are interaction with KCNE3. Residues 242–259 (RQGGTWRLLGSVVFIHRQ) are Cytoplasmic-facing. An a 1,2-diacyl-sn-glycero-3-phospho-(1D-myo-inositol-4,5-bisphosphate)-binding site is contributed by Q243. Residues 260 to 282 (ELITTLYIGFLGLIFSSYFVYLA) traverse the membrane as a helical segment. Topologically, residues 283–298 (EKDAVNESGRVEFGSY) are extracellular. A glycan (N-linked (GlcNAc...) asparagine) is linked at N288. Positions 299–319 (ADALWWGVVTVTTIGYGDKVP) form an intramembrane region, pore-forming. Over 320 to 321 (QT) the chain is Extracellular. A helical membrane pass occupies residues 322–347 (WVGKTIASCFSVFAISFFALPAGILG). The Cytoplasmic segment spans residues 348-661 (SGFALKVQQK…VPRRDPEEGS (314 aa)). The segment at 369 to 381 (AAASLIQTAWRCY) is interaction with CALM. Phosphoserine is present on residues S406 and S408. An interaction with CALM; calcium-dependent region spans residues 514–528 (KVIRRMQYFVAKKKF). The tract at residues 534–571 (PYDVRDVIEQYSQGHLNLMVRIKELQRRLDQSIGKPSL) is interaction with KCNE1 C-terminus. A coiled-coil region spans residues 584-620 (SNSIGARLNRVEDKVTQLDQRLVLIADMLQQLLALHQ). The tract at residues 587-615 (IGARLNRVEDKVTQLDQRLVLIADMLQQL) is interaction with AKAP9. The C-terminal assembly domain (tetramerization) stretch occupies residues 588–619 (GARLNRVEDKVTQLDQRLVLIADMLQQLLALH). Positions 624–661 (HGGAHPAQARDGDPADPELFLPTYEQLTVPRRDPEEGS) are disordered.

Belongs to the potassium channel family. KQT (TC 1.A.1.15) subfamily. Kv7.1/KCNQ1 sub-subfamily. As to quaternary structure, tetramer. Heterotetramer with KCNE1; targets to the membrane raft. Interacts (via C-terminus) with CALM; forms a heterooctameric structure (with 4:4 KCNQ1:CALM stoichiometry) in a calcium-independent manner. Interacts with AKAP9; targets protein kinase A (PKA) catalytic and regulatory subunits and protein phosphatase 1 (PP1) to the KCNQ1-KCNE1 complex, allowing PKA-mediated phosphorylation and increase of delayed rectifier potassium channel activity. Interacts with KCNE2; form a heterooligomer complex that targets to the membrane raft and leading to currents with an apparently instantaneous activation, a rapid deactivation process and a linear current-voltage relationship and decreases the amplitude of the outward current. Interacts with AP2M1; mediates estrogen-induced internalization via clathrin-coated vesicles. Interacts with NEDD4L; promotes internalization and decreases I(Ks) currents. Interacts with USP2; counteracts the NEDD4L-specific down-regulation of I(Ks) and restore plasma membrane localization. Heterotetramer with KCNQ5; has a voltage-gated potassium channel activity. Interacts with KCNE3; four KCNE3 molecules are bound to one KCNQ1 tetramer (4:4 KCNQ1:KCNE3 stoichiometry); alters membrane raft localization; affects KCNQ1 structure and gating properties. Interacts with KCNE4; impairs KCNQ1 localization in lipid rafts and inhibits voltage-gated potassium channel activity. Interacts with KCNE5; impairs KCNQ1 localization in lipid rafts and only conducts current upon strong and continued depolarization. Interacts with SLC5A3; forms coregulatory channel-transporter complexes that modulate Na(+)-coupled myo-inositol influx through the transporter. In terms of processing, phosphorylation at Ser-27 by PKA; increases delayed rectifier potassium channel activity of the KCNQ1-KCNE1 complex through a macromolecular complex that includes PKA, PP1, and the targeting protein AKAP9. Post-translationally, ubiquitinated by NEDD4L; promotes internalization. The ubiquitinylated form is internalized through a clathrin-mediated endocytosis by interacting with AP2M1 and is recycled back to the cell membrane via RAB4A and RAB11A. Deubiquitinated by USP2; counteracts the NEDD4L-specific down-regulation of I(Ks) and restores the membrane localization.

It is found in the cell membrane. It localises to the cytoplasmic vesicle membrane. The protein resides in the early endosome. The protein localises to the membrane raft. Its subcellular location is the endoplasmic reticulum. It is found in the basolateral cell membrane. It localises to the apical cell membrane. The enzyme catalyses K(+)(in) = K(+)(out). PIP2 molecule is essential to activate KCNQ channels by inducing the coupling of the voltage-sensing domain (VSD) and the pore-forming domain (PD). Upon channel activation, PIP2 disrupts the VSD-calmodulin/CALM interactions, causing the release of CALM from the VSD which triggers the opening of the gate. Calcium potentiates KCNQ1 channel current through calcium-bound CALM. Calcium-bound CALM competes with PIP2 to stabilize the channel open state. Functionally, pore-forming subunit of the voltage-gated potassium (Kv) channel involved in the regulation of cardiomyocyte excitability and important in normal development and functions of myocardium, inner ear, stomach and colon. Associates with KCNE beta subunits that modulates current kinetics. Induces a voltage-dependent by rapidly activating and slowly deactivating potassium-selective outward current. Also promotes a delayed voltage activated potassium current showing outward rectification characteristic. During beta-adrenergic receptor stimulation participates in cardiac repolarization by associating with KCNE1 to form the I(Ks) cardiac potassium current that increases the amplitude and slows down the activation kinetics of outward potassium current I(Ks). Muscarinic agonist oxotremorine-M strongly suppresses KCNQ1/KCNE1 current. When associated with KCNE3, forms the potassium channel that is important for cyclic AMP-stimulated intestinal secretion of chloride ions. This interaction with KCNE3 is reduced by 17beta-estradiol, resulting in the reduction of currents. During conditions of increased substrate load, maintains the driving force for proximal tubular and intestinal sodium ions absorption, gastric acid secretion, and cAMP-induced jejunal chloride ions secretion. Allows the provision of potassium ions to the luminal membrane of the secretory canaliculus in the resting state as well as during stimulated acid secretion. When associated with KCNE2, forms a heterooligomer complex leading to currents with an apparently instantaneous activation, a rapid deactivation process and a linear current-voltage relationship and decreases the amplitude of the outward current. When associated with KCNE4, inhibits voltage-gated potassium channel activity. When associated with KCNE5, this complex only conducts current upon strong and continued depolarization. Also forms a heterotetramer with KCNQ5 that has a voltage-gated potassium channel activity. Binds with phosphatidylinositol 4,5-bisphosphate. KCNQ1-KCNE2 channel associates with Na(+)-coupled myo-inositol symporter in the apical membrane of choroid plexus epithelium and regulates the myo-inositol gradient between blood and cerebrospinal fluid with an impact on neuron excitability. The polypeptide is Potassium voltage-gated channel subfamily KQT member 1 (Oryctolagus cuniculus (Rabbit)).